The primary structure comprises 218 residues: MSIISSEAQKVRQALIKKGIETPTIELTQDKDSRRAEIQQHMRSVLELLGLDLRDDSLEETPHRLAKMYVDEIFSGLDYATFPKITTIENRMKVSEMVLVDDITLTSTCEHHFVTIDGKVAVAYYPKKWVIGLSKINRVVQFFAQRPQVQERFTEQILTAFQTILETEDVAIYVKATHFCVKCRGIKDSNSYTVTSAFGGVFLDDRETRKEFLNLIHK.

Residues cysteine 109, histidine 112, and cysteine 180 each contribute to the Zn(2+) site.

The protein belongs to the GTP cyclohydrolase I family. In terms of assembly, toroid-shaped homodecamer, composed of two pentamers of five dimers.

The enzyme catalyses GTP + H2O = 7,8-dihydroneopterin 3'-triphosphate + formate + H(+). It participates in cofactor biosynthesis; 7,8-dihydroneopterin triphosphate biosynthesis; 7,8-dihydroneopterin triphosphate from GTP: step 1/1. This is GTP cyclohydrolase 1 from Haemophilus ducreyi (strain 35000HP / ATCC 700724).